The chain runs to 316 residues: MSLDVVVVMDPIASIKIAKDTTFAMLLEAQRRGHRLHYVRPGGLSLHEGRAVAQVAPLSVREDKASWFTLGAFTELVFGPGQVVLMRKDPPVDAEFIYDTQVLAVAQRAGAQVVNDPQGLRDYNEKLAALLFPQCCPPTLVSRDAAALKAFVLAHGQAVLKPLDGMGGRSIFRSGTGDPNLNVILETLTDGGRKLTLAQRFIPDITAGDKRILLVDGEPVDYCLARIPQGDEFRGNLAAGGRGEGRPLSERDRWIAAQVGPEMKRRGMRFVGLDVIGDYLTEVNVTSPTCVRELDAQFGLNIAGLLFDAIEAGTAQ.

In terms of domain architecture, ATP-grasp spans 124–311 (NEKLAALLFP…IAGLLFDAIE (188 aa)). 151–208 (FVLAHGQAVLKPLDGMGGRSIFRSGTGDPNLNVILETLTDGGRKLTLAQRFIPDITAG) lines the ATP pocket. 2 residues coordinate Mg(2+): Glu282 and Asn284.

This sequence belongs to the prokaryotic GSH synthase family. The cofactor is Mg(2+). Mn(2+) serves as cofactor.

It carries out the reaction gamma-L-glutamyl-L-cysteine + glycine + ATP = glutathione + ADP + phosphate + H(+). Its pathway is sulfur metabolism; glutathione biosynthesis; glutathione from L-cysteine and L-glutamate: step 2/2. This is Glutathione synthetase from Xanthomonas campestris pv. campestris (strain ATCC 33913 / DSM 3586 / NCPPB 528 / LMG 568 / P 25).